We begin with the raw amino-acid sequence, 361 residues long: 1D-myo-inositol 2-acetamido-2-deoxy-alpha-D-glucopyranoside deacetylase (361 aa).

Residues M1–D12 show a composition bias toward pro residues. A disordered region spans residues M1–D27. Low complexity predominate over residues E16–G25. Residues H66, D69, and H207 each contribute to the Zn(2+) site.

Belongs to the MshB deacetylase family. Requires Zn(2+) as cofactor.

The catalysed reaction is 1D-myo-inositol 2-acetamido-2-deoxy-alpha-D-glucopyranoside + H2O = 1D-myo-inositol 2-amino-2-deoxy-alpha-D-glucopyranoside + acetate. Its function is as follows. Catalyzes the deacetylation of 1D-myo-inositol 2-acetamido-2-deoxy-alpha-D-glucopyranoside (GlcNAc-Ins) in the mycothiol biosynthesis pathway. The protein is 1D-myo-inositol 2-acetamido-2-deoxy-alpha-D-glucopyranoside deacetylase of Kineococcus radiotolerans (strain ATCC BAA-149 / DSM 14245 / SRS30216).